Consider the following 149-residue polypeptide: MTDALSEEQIAEFKEAFSLFDKDGDGTITTKELGTVMRSLGQNPTEAELQDMINEVDADGNGTIDFPEFLTMMARKMKETDSEEEIREAFRVFDKDGNGFISAAELRHVMTNLGEKLTDEEVDEMIREADIDGDGQVNYEEFVAMMTSK.

The residue at position 2 (T2) is an N-acetylthreonine. EF-hand domains lie at 8-43 (EQIA…LGQN), 44-79 (PTEA…KMKE), 81-116 (DSEE…LGEK), and 117-149 (LTDE…MTSK). Ca(2+)-binding residues include D21, D23, D25, T27, E32, D57, D59, N61, T63, E68, D94, D96, N98, and E105. K116 is modified (N6,N6,N6-trimethyllysine). D130, D132, D134, Q136, and E141 together coordinate Ca(2+).

The protein belongs to the calmodulin family.

Its function is as follows. Calmodulin mediates the control of a large number of enzymes, ion channels and other proteins by Ca(2+). Among the enzymes to be stimulated by the calmodulin-Ca(2+) complex are a number of protein kinases and phosphatases. The sequence is that of Calmodulin from Halichondria okadai (Marine sponge).